The chain runs to 85 residues: RNA-binding protein Hfq (85 aa).

The Sm domain occupies 9 to 68; that stretch reads DPFLNALRRERVPVSIYLVNGIKLQGQVESFDQFVILLKNTVSQMVYKHAISTVVPARPF.

Belongs to the Hfq family. As to quaternary structure, homohexamer.

Its function is as follows. RNA chaperone that binds small regulatory RNA (sRNAs) and mRNAs to facilitate mRNA translational regulation in response to envelope stress, environmental stress and changes in metabolite concentrations. Also binds with high specificity to tRNAs. This Shewanella frigidimarina (strain NCIMB 400) protein is RNA-binding protein Hfq.